Here is a 229-residue protein sequence, read N- to C-terminus: Cytochrome c oxidase subunit 2 (229 aa).

Topologically, residues 1–26 are mitochondrial intermembrane; it reads MSTWANLGLQDSASPLMEQLIFFHDH. Residues 27–48 traverse the membrane as a helical segment; the sequence is ALLILVMITVLVGYLMVMLFFN. Residues 49–62 lie on the Mitochondrial matrix side of the membrane; the sequence is SYVNRFLLHGQLIE. Residues 63–82 traverse the membrane as a helical segment; that stretch reads MIWTILPAIILLFIAMPSLR. The Mitochondrial intermembrane segment spans residues 83–229; it reads LLYLLDEINE…IKWISDKVNS (147 aa). Histidine 161, cysteine 196, glutamate 198, cysteine 200, histidine 204, and methionine 207 together coordinate Cu cation. Glutamate 198 serves as a coordination point for Mg(2+).

The protein belongs to the cytochrome c oxidase subunit 2 family. As to quaternary structure, component of the cytochrome c oxidase (complex IV, CIV), a multisubunit enzyme composed of a catalytic core of 3 subunits and several supernumerary subunits. The complex exists as a monomer or a dimer and forms supercomplexes (SCs) in the inner mitochondrial membrane with ubiquinol-cytochrome c oxidoreductase (cytochrome b-c1 complex, complex III, CIII). The cofactor is Cu cation.

Its subcellular location is the mitochondrion inner membrane. The catalysed reaction is 4 Fe(II)-[cytochrome c] + O2 + 8 H(+)(in) = 4 Fe(III)-[cytochrome c] + 2 H2O + 4 H(+)(out). Component of the cytochrome c oxidase, the last enzyme in the mitochondrial electron transport chain which drives oxidative phosphorylation. The respiratory chain contains 3 multisubunit complexes succinate dehydrogenase (complex II, CII), ubiquinol-cytochrome c oxidoreductase (cytochrome b-c1 complex, complex III, CIII) and cytochrome c oxidase (complex IV, CIV), that cooperate to transfer electrons derived from NADH and succinate to molecular oxygen, creating an electrochemical gradient over the inner membrane that drives transmembrane transport and the ATP synthase. Cytochrome c oxidase is the component of the respiratory chain that catalyzes the reduction of oxygen to water. Electrons originating from reduced cytochrome c in the intermembrane space (IMS) are transferred via the dinuclear copper A center (CU(A)) of subunit 2 and heme A of subunit 1 to the active site in subunit 1, a binuclear center (BNC) formed by heme A3 and copper B (CU(B)). The BNC reduces molecular oxygen to 2 water molecules using 4 electrons from cytochrome c in the IMS and 4 protons from the mitochondrial matrix. This chain is Cytochrome c oxidase subunit 2 (mt:CoII), found in Drosophila subobscura (Fruit fly).